A 236-amino-acid chain; its full sequence is UPF0257 lipoprotein YnfC (236 aa).

An N-terminal signal peptide occupies residues 1-16 (MKKPLLLTLLCMILAG). The N-palmitoyl cysteine moiety is linked to residue cysteine 17. Cysteine 17 carries the S-diacylglycerol cysteine lipid modification.

The protein belongs to the UPF0257 family.

It localises to the cell membrane. The protein is UPF0257 lipoprotein YnfC of Salmonella heidelberg (strain SL476).